Consider the following 447-residue polypeptide: NAC domain containing protein 50 (447 aa).

Positions 1–21 (MGRESLAVVSSPPSATAPSTA) are disordered. Positions 27 to 178 (LAPGFRFHPT…AYVLCRVFHK (152 aa)) constitute an NAC domain. Residues 126-184 (LGMKKTLVFHSGRAPDGLRTNWVMHEYRLVEYETETNGSLLQDAYVLCRVFHKNNIGPP) mediate DNA binding. Disordered regions lie at residues 246–303 (DATP…NKEA) and 371–392 (KENQ…EEKV). The segment covering 281–293 (TLKREHAEEDERP) has biased composition (basic and acidic residues). Residues 392–447 (VNDLQKEVHQMSVERETFKLEMMSAEAMISILQSRIDALRQENEELKKKNASGQAS) adopt a coiled-coil conformation.

As to quaternary structure, interacts with JMJ14 and NAC052. In terms of tissue distribution, mostly expressed in floral organs, and, at low levels, in other organs.

It localises to the nucleus. Its function is as follows. Transcriptional repressor that binds to the motif 5'-(C/T)A(C/A)G-3' in the promoter of target genes. Also binds to the 5'-CTTGNNNNNCAAG-3' consensus sequence in chromatin. Can bind to the mitochondrial dysfunction motif (MDM) present in the upstream regions of mitochondrial dysfunction stimulon (MDS) genes involved in mitochondrial retrograde regulation (MRR). Together with NAC051/NAC052 and JMJ14, regulates gene expression and flowering time by associating with the histone demethylase JMJ14, probably by the promotion of RNA-mediated gene silencing. The chain is NAC domain containing protein 50 from Arabidopsis thaliana (Mouse-ear cress).